Here is a 50-residue protein sequence, read N- to C-terminus: Light-harvesting protein B-870 beta chain (50 aa).

Over 2–22 (ADNTDLSFTGLTDEQAQELHS) the chain is Cytoplasmic. Residues His21 and His39 each coordinate a bacteriochlorophyll. Residues 23 to 45 (VYMSGLFLFAAVAVVAHLATYIW) traverse the membrane as a helical segment. Residues 46–50 (RPWFG) lie on the Periplasmic side of the membrane.

It belongs to the antenna complex beta subunit family. As to quaternary structure, the core complex is formed by different alpha and beta chains, binding bacteriochlorophyll molecules, and arranged most probably in tetrameric structures disposed around the reaction center. The non-pigmented gamma chains may constitute additional components.

The protein resides in the cell inner membrane. Functionally, antenna complexes are light-harvesting systems, which transfer the excitation energy to the reaction centers. The protein is Light-harvesting protein B-870 beta chain (pufB) of Roseobacter denitrificans (strain ATCC 33942 / OCh 114) (Erythrobacter sp. (strain OCh 114)).